The chain runs to 148 residues: Large ribosomal subunit protein uL11 (148 aa).

The segment at 89–108 is disordered; the sequence is EKKKGSGAHKPGKEKVGQVT.

The protein belongs to the universal ribosomal protein uL11 family. Part of the ribosomal stalk of the 50S ribosomal subunit. Interacts with L10 and the large rRNA to form the base of the stalk. L10 forms an elongated spine to which L12 dimers bind in a sequential fashion forming a multimeric L10(L12)X complex. In terms of processing, one or more lysine residues are methylated.

In terms of biological role, forms part of the ribosomal stalk which helps the ribosome interact with GTP-bound translation factors. This chain is Large ribosomal subunit protein uL11, found in Anaeromyxobacter sp. (strain Fw109-5).